We begin with the raw amino-acid sequence, 689 residues long: MSNVEKKISQLQQQLNQYNHEYYVLDQPSVPDAEYDRLMTALIDLEKTNPELKTIDSPSQKVGGQALKSFTQVTHQLPMLSLDNVFSLDDFHAFVKRVKDRLNDNQAIVFCAEPKLDGLAVSLRYEHGQLIQAATRGDGSVGENITTNIRTIKSIPLKLMGTPGKDFPDIVEVRGEVFMPKASFDALNTLAKKRGEKGFANPRNAAAGSLRQLDSKITAKRNLAFYAYSLGFVGKLSDGGAESTDLTNDFFANSHHERLCQLKRLGLPMCPEVRLLESEQACDAFYQDILAKRSALSYEIDGTVLKVDEISLQKRLGFVARAPRWAIAYKFPAEEELTCVEDVEFQVGRTGAITPVARLKPVFVGGVTVSNATLHNQDEITRLGLKVNDFVVIRRAGDVIPQIVSVVLDKRPDNAVDIVFPTSCPVCDSAVAKPEGEAVLRCTAGLFCAAQRKEAIKHFASRKAHDVDGLGDKLVEQLVDEKLINTPADLFKLTEIQVSTIDRMGKKSATNLINGLEQAKSTTLAKFIYGLGIREVGEATAANLANHFYTLAAIESASLEDLQNVSDVGEVVAKNIINFFKEEHNLAIVSGLSEVMHWPTIEIKSAEELPLAEQIFVLTGTLTQMGRTEAKTALQSLGAKVSGSVSKNTHFVVAGDKAGSKLTKAQDLGISVLTEDGLVALLAEHGITI.

Residues 32–36 (DAEYD), 81–82 (SL), and Glu-113 contribute to the NAD(+) site. Lys-115 serves as the catalytic N6-AMP-lysine intermediate. The NAD(+) site is built by Arg-136, Glu-176, Lys-306, and Lys-330. Cys-424, Cys-427, Cys-442, and Cys-448 together coordinate Zn(2+). The BRCT domain occupies 606-689 (AEELPLAEQI…ALLAEHGITI (84 aa)).

It belongs to the NAD-dependent DNA ligase family. LigA subfamily. It depends on Mg(2+) as a cofactor. Mn(2+) is required as a cofactor.

The enzyme catalyses NAD(+) + (deoxyribonucleotide)n-3'-hydroxyl + 5'-phospho-(deoxyribonucleotide)m = (deoxyribonucleotide)n+m + AMP + beta-nicotinamide D-nucleotide.. DNA ligase that catalyzes the formation of phosphodiester linkages between 5'-phosphoryl and 3'-hydroxyl groups in double-stranded DNA using NAD as a coenzyme and as the energy source for the reaction. It is essential for DNA replication and repair of damaged DNA. This is DNA ligase from Colwellia psychrerythraea (strain 34H / ATCC BAA-681) (Vibrio psychroerythus).